Reading from the N-terminus, the 1211-residue chain is A disintegrin and metalloproteinase with thrombospondin motifs 2 (1211 aa).

A signal peptide spans 1–29 (MDPPAGAARRLLCPALLLLLLLLPPPLLP). The propeptide occupies 30–253 (PPPPPANARL…GVLEEHANSS (224 aa)). 2 N-linked (GlcNAc...) asparagine glycosylation sites follow: N112 and N251. The 205-residue stretch at 266 to 470 (YNIEVLLGVD…HSYDCLLDDP (205 aa)) folds into the Peptidase M12B domain. Intrachain disulfides connect C343/C392, C386/C465, C425/C451, C492/C517, C503/C526, C512/C545, C539/C550, C573/C610, C577/C615, and C588/C600. H408 is a binding site for Zn(2+). Residue E409 is part of the active site. 2 residues coordinate Zn(2+): H412 and H418. Positions 480 to 560 (QLPGLHYSMN…IWLTPDILKR (81 aa)) constitute a Disintegrin domain. The region spanning 561-616 (DGSWGAWSPFGSCSRTCGTGVKFRTRQCDNPHPANGGRTCSGLAYDFQLCSRQDCP) is the TSP type-1 1 domain. Positions 691–693 (RGD) match the Cell attachment site motif. A spacer region spans residues 723 to 851 (KVVKGTFTRS…NVDDNNVLEE (129 aa)). 3 consecutive TSP type-1 domains span residues 854–912 (VVYE…NPQE), 914–971 (SQPV…RACS), and 975–1029 (CPGR…GPCP). Residues N949 and N993 are each glycosylated (N-linked (GlcNAc...) asparagine). 3 disulfides stabilise this stretch: C987/C1023, C991/C1028, and C1002/C1012. Residue N1031 is glycosylated (N-linked (GlcNAc...) asparagine). The PLAC domain maps to 1059-1097 (SKGHCQGDKSIFCRMEVLSRYCSIPGYNKLCCKSCNLYN). Residues N1098, N1145, and N1150 are each glycosylated (N-linked (GlcNAc...) asparagine). A disordered region spans residues 1170-1191 (LEDEVQPPNLIPRRPSPYEKTR).

In terms of assembly, may belong to a multimeric complex. Binds specifically to collagen type XIV. The cofactor is Zn(2+). In terms of processing, the precursor is cleaved by a furin endopeptidase. Post-translationally, glycosylated. Can be O-fucosylated by POFUT2 on a serine or a threonine residue found within the consensus sequence C1-X(2)-(S/T)-C2-G of the TSP type-1 repeat domains where C1 and C2 are the first and second cysteine residue of the repeat, respectively. Fucosylated repeats can then be further glycosylated by the addition of a beta-1,3-glucose residue by the glucosyltransferase, B3GALTL. Fucosylation mediates the efficient secretion of ADAMTS family members. Can also be C-glycosylated with one or two mannose molecules on tryptophan residues within the consensus sequence W-X-X-W of the TPRs, and N-glycosylated. These other glycosylations can also facilitate secretion. In terms of tissue distribution, expressed at high level in skin, bone, tendon and aorta and at low levels in thymus and brain.

It is found in the secreted. It localises to the extracellular space. The protein resides in the extracellular matrix. It carries out the reaction Cleaves the N-propeptide of collagen chain alpha1(I) at Pro-|-Gln and of alpha1(II) and alpha2(I) at Ala-|-Gln.. Functionally, cleaves the propeptides of type I and II collagen prior to fibril assembly. Does not act on type III collagen. Cleaves lysyl oxidase LOX at a site downstream of its propeptide cleavage site to produce a short LOX form with reduced collagen-binding activity. This Homo sapiens (Human) protein is A disintegrin and metalloproteinase with thrombospondin motifs 2 (ADAMTS2).